The primary structure comprises 1387 residues: MYRAGEPGKRQSGPAPPRVRSVEVARGRAGYGFTLSGQAPCVLSCVMRGSPADFVGLRAGDQILAINEINVKKASHEDVVKLIGKCSGVLRMVISEGSSHVEPSSSDEEGGLCEGKGWLRPKLDSKALGINRAERVVEEVQSGGIFNMIFESPSLCASGSEPLKLKQRSLSESAALRLDVGQDSLCTPHPSMLSKEEISKVINDDSVFTVGLDNHDDFGLDASILNVAMVVGYLGSIELPSTSSNLEHDSLQAIRGCMRRLRAEQKIHSLVTMKVMHDCVQLVTDRAGVVAEYPAEKLAFSAVCPDDRRFFGLVTMQTNDDGCLAQEDEGALRTSCHVFMVDPDLFHHKIHQGIARRFGFACTADPDTSGCLEFPASSLPVLQFISVLYRDMGELIEGVRARAFLDGDADAHQNNSTSSNSDSGIGNFNQEEKSNRVLVVDLGGGSSRHGQGSSPGWESVSGRGSQPWSAPWNGTFCHDSEAGSPLETSPNTDRFWDLTKHSGPVFHMEVPPATLRSSIPPSKRGATGSSCGFNQRWLPVHVLQEWQCGHASDQESYTDSTDGWSSVNCGTLPPPMSKIPADRYRVEGSFAQAPLSTQKRDWSRKAFGMQNLFGPHRNVRKTKEDKKSSKLGRGVALAQTSQRTSARRSFGRSRRFSLTRSLDDLESATVSDGELTGADLKDCISNNSLSSNASLPSVQSCRRLRERRVASWAVSFERLLQDPVGVRYFSDFLRKEFSEENILFWQACECFSHVPAHDKKELSYRAREIFSKFLCSKATTPVNIDSQAQLADDILNAPHPDMFKEQQLQIFNLMKFDSYTRFLKSQLYQECVLAEVEGRTLPDSQQVPSSPASKHSISSDHSNVSTPKKLSGKSKSGRSLNEDVGEEDSEKKRKGAFFSWSRSRSTGRSQKKKDHGDHAHDALHANGGLCRRESQGSVSSAGSLDLSEACRTSALERDKAAKHCCVHLPDGTSCVVAVKSGFSIKEILSGLCERHGINGAAVDLFLVGGDKPLVLHQDSSILATRDLRLGKRTLFRLDLVPINRSVGLKAKPTKPVTEVLRPVVAKYGLDLGSLLVRLSGEKEPLDLGAPISSLDGQRVILEERDPSRGKVSTEKQKGAPVKQSSAVNSSPRNHSAMGEERTLGKSNSIKIRGENGKSARDPRLSKREESIAKIGKKKYQKINLDEAEEFFELISKAQSNRADDQRGLLRKEDLVLPEFLRLPPGSSELALSSPPPVKGFSKRAVTSHGQEGAVQTEESYSDSPATSPASAQSPCSAYSPGSAHSPGSAHSPGSAHSTPGPPGTAQPGEKPTKPSCISTVQEGTTQAWRRLSPELEAGGIQTVEEEQVADLTLMGEGDISSPNSTLLPPPPLPQDTPGPTRPGTSRF.

One can recognise a PDZ domain in the interval 21 to 97; the sequence is SVEVARGRAG…GVLRMVISEG (77 aa). 2 positions are modified to phosphoserine: Ser171 and Ser194. Lys195 is covalently cross-linked (Glycyl lysine isopeptide (Lys-Gly) (interchain with G-Cter in SUMO2)). The region spanning 227-339 is the PID domain; the sequence is VAMVVGYLGS…GALRTSCHVF (113 aa). Disordered regions lie at residues 409-428 and 442-488; these read ADAH…IGNF and LGGG…PLET. The span at 412 to 428 shows a compositional bias: polar residues; it reads HQNNSTSSNSDSGIGNF. Arg524 and Arg633 each carry omega-N-methylarginine. The interval 620-650 is disordered; it reads RKTKEDKKSSKLGRGVALAQTSQRTSARRSF. 2 positions are modified to phosphoserine: Ser661 and Ser671. Residues 715–832 form the RGS domain; that stretch reads SFERLLQDPV…LKSQLYQECV (118 aa). The tract at residues 842-934 is disordered; it reads PDSQQVPSSP…ANGGLCRRES (93 aa). Residues 849–869 are compositionally biased toward low complexity; it reads SSPASKHSISSDHSNVSTPKK. Phosphoserine occurs at positions 850 and 879. Positions 914–923 are enriched in basic and acidic residues; that stretch reads DHGDHAHDAL. Ser943 bears the Phosphoserine mark. RBD domains are found at residues 962–1032 and 1034–1104; these read KHCC…LGKR and LFRL…LEER. Over residues 1103–1117 the composition is skewed to basic and acidic residues; the sequence is ERDPSRGKVSTEKQK. The segment at 1103–1168 is disordered; sequence ERDPSRGKVS…ARDPRLSKRE (66 aa). Positions 1122 to 1133 are enriched in polar residues; sequence KQSSAVNSSPRN. Over residues 1151–1168 the composition is skewed to basic and acidic residues; that stretch reads IRGENGKSARDPRLSKRE. The region spanning 1187–1209 is the GoLoco domain; the sequence is AEEFFELISKAQSNRADDQRGLL. 2 disordered regions span residues 1224–1325 and 1349–1387; these read PGSS…EGTT and ADLT…TSRF. Residues 1261–1280 show a composition bias toward low complexity; that stretch reads SDSPATSPASAQSPCSAYSP. Polar residues predominate over residues 1315-1325; it reads SCISTVQEGTT. Residues 1367 to 1380 show a composition bias toward pro residues; sequence LPPPPLPQDTPGPT.

Interacts with GNAI1, GNAI2 and GNAI3; the interactions are GDP-dependent. Detected in brain cortex GABAergic neurons, in striatum and substantia nigra, and in the Purkinje cell layer in the cerebellum and hippocampus (at protein level). Expressed at high levels in brain and lung and lower levels in testis, heart, and spleen.

It localises to the nucleus. Its subcellular location is the cytoplasm. The protein localises to the cell projection. It is found in the dendrite. The protein resides in the synapse. Its function is as follows. Regulates G protein-coupled receptor signaling cascades. Inhibits signal transduction by increasing the GTPase activity of G protein alpha subunits, thereby driving them into their inactive GDP-bound form. The sequence is that of Regulator of G-protein signaling 12 (Rgs12) from Rattus norvegicus (Rat).